We begin with the raw amino-acid sequence, 336 residues long: Phytochrome A-associated F-box protein (336 aa).

Residues 3 to 55 (ESVFSCIPEDVVFNIFFKLQDDPRNWARLACVCTKFSSIVRNVCCKTQCYSAI) form the F-box domain. Residues 197-201 (RKRRK) carry the Nuclear localization signal motif.

Probable component of an E3 ubiquitin ligase SCF complex. Interacts with SKP1A/ASK1 and SKP1B/ASK2.

It localises to the nucleus. The protein operates within protein modification; protein ubiquitination. In terms of biological role, component of SCF(ASK-cullin-F-box) E3 ubiquitin ligase complexes, which may mediate the ubiquitination and subsequent proteasomal degradation of target proteins. Negative regulator of the phyA signaling pathway that shifts the responsiveness of the phyA signaling system associated with hypocotyl elongation from red to far-red wavelength. In Arabidopsis thaliana (Mouse-ear cress), this protein is Phytochrome A-associated F-box protein (EID1).